Reading from the N-terminus, the 521-residue chain is 2,3-bisphosphoglycerate-independent phosphoglycerate mutase (521 aa).

Residues Asp-18 and Ser-68 each contribute to the Mn(2+) site. Ser-68 acts as the Phosphoserine intermediate in catalysis. Substrate is bound by residues His-129, 158–159 (RD), Arg-190, Arg-196, 266–269 (RSDR), and Lys-343. Residues Asp-410, His-414, Asp-451, His-452, and His-470 each contribute to the Mn(2+) site.

This sequence belongs to the BPG-independent phosphoglycerate mutase family. In terms of assembly, monomer. Mn(2+) is required as a cofactor.

It carries out the reaction (2R)-2-phosphoglycerate = (2R)-3-phosphoglycerate. It functions in the pathway carbohydrate degradation; glycolysis; pyruvate from D-glyceraldehyde 3-phosphate: step 3/5. Functionally, catalyzes the interconversion of 2-phosphoglycerate and 3-phosphoglycerate. The polypeptide is 2,3-bisphosphoglycerate-independent phosphoglycerate mutase (Hydrogenovibrio crunogenus (strain DSM 25203 / XCL-2) (Thiomicrospira crunogena)).